A 99-amino-acid chain; its full sequence is Small ribosomal subunit protein bS18 (99 aa).

Belongs to the bacterial ribosomal protein bS18 family. Part of the 30S ribosomal subunit. Forms a tight heterodimer with protein bS6.

Its function is as follows. Binds as a heterodimer with protein bS6 to the central domain of the 16S rRNA, where it helps stabilize the platform of the 30S subunit. The chain is Small ribosomal subunit protein bS18 from Christiangramia forsetii (strain DSM 17595 / CGMCC 1.15422 / KT0803) (Gramella forsetii).